The primary structure comprises 232 residues: tRNA (guanine-N(1)-)-methyltransferase (232 aa).

Residues Gly-108 and 128-133 contribute to the S-adenosyl-L-methionine site; that span reads IGDFIM.

It belongs to the RNA methyltransferase TrmD family. Homodimer.

It localises to the cytoplasm. It carries out the reaction guanosine(37) in tRNA + S-adenosyl-L-methionine = N(1)-methylguanosine(37) in tRNA + S-adenosyl-L-homocysteine + H(+). Its function is as follows. Specifically methylates guanosine-37 in various tRNAs. This is tRNA (guanine-N(1)-)-methyltransferase from Campylobacter fetus subsp. fetus (strain 82-40).